Reading from the N-terminus, the 490-residue chain is UDP-glycosyltransferase 86A1 (490 aa).

Residues S294, 352-354, 369-377, and 391-394 contribute to the UDP-alpha-D-glucose site; these read CCQ, HCGWNSILE, and LTDQ.

It belongs to the UDP-glycosyltransferase family.

This is UDP-glycosyltransferase 86A1 (UGT86A1) from Arabidopsis thaliana (Mouse-ear cress).